Consider the following 638-residue polypeptide: Golgin subfamily A member 8S (638 aa).

A compositionally biased stretch (pro residues) spans 1–11 (MWPQARLPPHP). Residues 1 to 84 (MWPQARLPPH…GESPTSSATL (84 aa)) form a disordered region. The span at 50–62 (TNGSIHETATSGG) shows a compositional bias: polar residues. Coiled-coil stretches lie at residues 105-160 (VSQL…LNTD), 223-275 (LEQS…MSQE), and 318-417 (EAEL…QQKQ). Disordered regions lie at residues 427–453 (ALPGEGDGGGHLDSEGEEAPRPIPSIP), 510–532 (KDAALGGGHHQAGAQGGDEDEAA), and 556–575 (AHNPADEPGPGAPAPQELGA). Positions 434-446 (GGGHLDSEGEEAP) are enriched in basic and acidic residues. Residues 514–525 (LGGGHHQAGAQG) are compositionally biased toward gly residues. Residues 561–574 (DEPGPGAPAPQELG) are compositionally biased toward low complexity.

Belongs to the GOLGA8 family.

The sequence is that of Golgin subfamily A member 8S from Homo sapiens (Human).